Here is a 344-residue protein sequence, read N- to C-terminus: MTENHYLLLTPGPLTTTKSVKEVMIYDWCTWDDEYNTMVQEVRAKLVSLATKEEEKYTTVLMQGSGTFSVEAVIGSVIPANGKILVCTNGAYGKRIVQMAEMLQIDVVVSQTEEWEPTNIVEVEKLLQEDKEITHIAVVHCETTTGIINPIVDVCKLGKQYGKVTIVDAMSSFGGIEIDIADLQIDFLISSANKCIQGVPGFGFVIAKRDELLKCKGQGRSLSLDLYDQWETMEKQNGKWRFTSPTHVVHAFYQALLELQKEGGVRARYNRYYNNQKLLVNRMGEIGFKPLVDEEYQAPIITSFIYPKQGFEFQQLYNELKRYGFVIYPGKISKVDTFGIGNIG.

Lys194 is modified (N6-(pyridoxal phosphate)lysine).

It belongs to the class-V pyridoxal-phosphate-dependent aminotransferase family. PhnW subfamily. Homodimer. Requires pyridoxal 5'-phosphate as cofactor.

The enzyme catalyses (2-aminoethyl)phosphonate + pyruvate = phosphonoacetaldehyde + L-alanine. In terms of biological role, involved in phosphonate degradation. This chain is 2-aminoethylphosphonate--pyruvate transaminase, found in Bacillus cereus.